A 355-amino-acid polypeptide reads, in one-letter code: C-C chemokine receptor type 1 (355 aa).

At 1 to 34 the chain is on the extracellular side; that stretch reads MEISDFTEAYPTTTEFDYGDSTPCQKTAVRAFGA. The helical transmembrane segment at 35 to 60 threads the bilayer; that stretch reads GLLPPLYSLVFIIGVVGNVLVILVLM. Topologically, residues 61–64 are cytoplasmic; the sequence is QHRR. A helical membrane pass occupies residues 65–91; the sequence is LQSMTSIYLFNLAVSDLVFLFTLPFWI. The Extracellular portion of the chain corresponds to 92–107; the sequence is DYKLKDDWIFGDAMCK. A disulfide bridge connects residues Cys106 and Cys183. Residues 108–129 form a helical membrane-spanning segment; sequence LLSGFYYLGLYSEIFFIILLTI. At 130–146 the chain is on the cytoplasmic side; the sequence is DRYLAIVHAVFALRART. The chain crosses the membrane as a helical span at residues 147 to 171; the sequence is VTFGIITSIITWALAILASMPALYF. Topologically, residues 172 to 197 are extracellular; it reads FKAQWEFTHRTCSPHFPYKSLKQWKR. Residues 198–223 form a helical membrane-spanning segment; the sequence is FQALKLNLLGLILPLLVMIICYAGII. The Cytoplasmic segment spans residues 224 to 239; sequence RILLRRPSEKKVKAVR. A helical membrane pass occupies residues 240–264; that stretch reads LIFAITLLFFLLWTPYNLSVFVSAF. The Extracellular segment spans residues 265–281; the sequence is QDVLFTNQCEQSKQLDL. The helical transmembrane segment at 282–305 threads the bilayer; sequence AMQVTEVIAYTHCCVNPIIYVFVG. Topologically, residues 306–355 are cytoplasmic; sequence ERFWKYLRQLFQRHVAIPLAKWLPFLSVDQLERTSSISPSTGEHELSAGF.

It belongs to the G-protein coupled receptor 1 family. As to quaternary structure, interacts with CREB3. Interacts with CCL3. Interacts with CCL15. Interacts with CCL23. Interacts with GNAI1. Interacts with PF4/CXCL4. As to expression, detected in the heart, spleen, lung, peritoneal exudate cells and leukocytes.

It is found in the cell membrane. Functionally, chemokine receptor that plays a crucial role in regulating immune cell migration, inflammation, and immune responses. Contributes to the inflammatory response by recruiting immune cells, such as monocytes, macrophages, T-cells, and dendritic cells, to sites of inflammation for the clearance of pathogens and the resolution of tissue damage. When activated by its ligands including CCL3, CCL5-9, CCL13-16 and CCL23, triggers a signaling cascade within immune cells, leading to their migration towards the source of the chemokine. For example, mediates neutrophil migration after activation by CCL3 leading to the sequential release of TNF-alpha and leukotriene B4. Also mediates monocyte migration upon CXCL4 binding. Activation by CCL5 results in neuroinflammation through the ERK1/2 signaling pathway. The sequence is that of C-C chemokine receptor type 1 (Ccr1) from Mus musculus (Mouse).